The following is a 370-amino-acid chain: Cobalt-precorrin-5B C(1)-methyltransferase (370 aa).

It belongs to the CbiD family.

It catalyses the reaction Co-precorrin-5B + S-adenosyl-L-methionine = Co-precorrin-6A + S-adenosyl-L-homocysteine. It functions in the pathway cofactor biosynthesis; adenosylcobalamin biosynthesis; cob(II)yrinate a,c-diamide from sirohydrochlorin (anaerobic route): step 6/10. In terms of biological role, catalyzes the methylation of C-1 in cobalt-precorrin-5B to form cobalt-precorrin-6A. This is Cobalt-precorrin-5B C(1)-methyltransferase from Pseudomonas syringae pv. syringae (strain B728a).